A 93-amino-acid chain; its full sequence is UPF0147 protein PH1921.2 (93 aa).

The protein belongs to the UPF0147 family.

The polypeptide is UPF0147 protein PH1921.2 (Pyrococcus horikoshii (strain ATCC 700860 / DSM 12428 / JCM 9974 / NBRC 100139 / OT-3)).